The primary structure comprises 519 residues: U3 small nucleolar RNA-associated protein 15 homolog (519 aa).

The residue at position 2 (Ala-2) is an N-acetylalanine. 7 WD repeats span residues 36–75 (KEFGAVSKVDFSPQPPYNYAVTASSRIHIYGRYSQEPIKT), 78–117 (RFKDTAYCATFRQDGRLLVAGSEDGGVQLFDISGRAPLRQ), 120–159 (GHTKAVHSVDFTADKYHVVSGADDYTVKLWDIPNSKEILT), 162–202 (EHSD…SVIS), 204–242 (EHGQPVESVLLFPSGGLLVSAGGRYVKVWDMLKGGQLLV), 246–285 (NHHKTVTCLCLSSSGQRLLSGSLDRKVKVYSTTSYKVVHS), and 287–326 (DYTASILSLALAHEDETIVVGMTNGILSVKHRKSEAKKDS). Lys-249 participates in a covalent cross-link: Glycyl lysine isopeptide (Lys-Gly) (interchain with G-Cter in SUMO2).

As to quaternary structure, part of the small subunit (SSU) processome, composed of more than 70 proteins and the RNA chaperone small nucleolar RNA (snoRNA) U3. May be a component of the proposed t-UTP subcomplex of the ribosomal small subunit (SSU) processome containing at least UTP4, WDR43, HEATR1, UTP15, WDR75. Interacts directly with UTP4 and WDR43.

The protein localises to the nucleus. It localises to the nucleolus. In terms of biological role, ribosome biogenesis factor. Involved in nucleolar processing of pre-18S ribosomal RNA. Required for optimal pre-ribosomal RNA transcription by RNA polymerase I. Part of the small subunit (SSU) processome, first precursor of the small eukaryotic ribosomal subunit. During the assembly of the SSU processome in the nucleolus, many ribosome biogenesis factors, an RNA chaperone and ribosomal proteins associate with the nascent pre-rRNA and work in concert to generate RNA folding, modifications, rearrangements and cleavage as well as targeted degradation of pre-ribosomal RNA by the RNA exosome. The chain is U3 small nucleolar RNA-associated protein 15 homolog from Bos taurus (Bovine).